The chain runs to 286 residues: Glycine--tRNA ligase alpha subunit (286 aa).

It belongs to the class-II aminoacyl-tRNA synthetase family. In terms of assembly, tetramer of two alpha and two beta subunits.

It is found in the cytoplasm. The enzyme catalyses tRNA(Gly) + glycine + ATP = glycyl-tRNA(Gly) + AMP + diphosphate. The chain is Glycine--tRNA ligase alpha subunit from Thermotoga sp. (strain RQ2).